A 284-amino-acid chain; its full sequence is Probable palmitoyltransferase ZDHHC24 (284 aa).

Topologically, residues 1–18 (MGQPWAAGSTDGAPAQLP) are cytoplasmic. Residues 19–39 (LVLTALWAAAVGLELAYVLVL) form a helical membrane-spanning segment. At 40–52 (GPGPPPLGPLARA) the chain is on the extracellular side. The chain crosses the membrane as a helical span at residues 53 to 73 (LQLALAAFQLLNLLGNVGLFL). The Cytoplasmic segment spans residues 74-137 (RSDPSIRGVM…GRCVGFGNYR (64 aa)). In terms of domain architecture, DHHC spans 94–144 (AYCYQCQSQVPPRSGHCSACRVCILRRDHHCRLLGRCVGFGNYRPFLCLLL). Residue Cys124 is the S-palmitoyl cysteine intermediate of the active site. A helical membrane pass occupies residues 138-158 (PFLCLLLHAAGVLLHVSVLLG). The Extracellular segment spans residues 159–166 (PALSALLR). The helical transmembrane segment at 167–187 (AHTPLHMAALLLLPWLMLLTG) threads the bilayer. The Cytoplasmic portion of the chain corresponds to 188–201 (RVSLAQFALAFVTD). A helical membrane pass occupies residues 202 to 222 (TCVAGALLCGAGLLFHGMLLL). Over 223-284 (RGQTTWEWAR…TTADVGHTAS (62 aa)) the chain is Extracellular.

This sequence belongs to the DHHC palmitoyltransferase family.

Its subcellular location is the membrane. It catalyses the reaction L-cysteinyl-[protein] + hexadecanoyl-CoA = S-hexadecanoyl-L-cysteinyl-[protein] + CoA. Its function is as follows. Probable palmitoyltransferase that could catalyze the addition of palmitate onto various protein substrates. In Homo sapiens (Human), this protein is Probable palmitoyltransferase ZDHHC24.